A 409-amino-acid chain; its full sequence is Carbamoyl phosphate synthase arginine-specific small chain (409 aa).

In terms of domain architecture, Glutamine amidotransferase type-1 spans 197–389 (NVALIDCGVK…FDNMSQYRAL (193 aa)). C277 serves as the catalytic Nucleophile. Residues H362 and E364 contribute to the active site.

The protein belongs to the CarA family. Heterodimer composed of 2 chains; the small (or glutamine) chain promotes the hydrolysis of glutamine to ammonia, which is used by the large (or ammonia) chain to synthesize carbamoyl phosphate.

It is found in the cytoplasm. The enzyme catalyses hydrogencarbonate + L-glutamine + 2 ATP + H2O = carbamoyl phosphate + L-glutamate + 2 ADP + phosphate + 2 H(+). The catalysed reaction is L-glutamine + H2O = L-glutamate + NH4(+). Its pathway is amino-acid biosynthesis; L-arginine biosynthesis; carbamoyl phosphate from bicarbonate: step 1/1. Functionally, small subunit of the arginine-specific carbamoyl phosphate synthase (CPSase). CPSase catalyzes the formation of carbamoyl phosphate from the ammonia moiety of glutamine, carbonate, and phosphate donated by ATP, constituting the first step of 2 biosynthetic pathways, one leading to arginine and/or urea and the other to pyrimidine nucleotides. The small subunit (glutamine amidotransferase) binds and cleaves glutamine to supply the large subunit with the substrate ammonia. This chain is Carbamoyl phosphate synthase arginine-specific small chain (CPA1), found in Kluyveromyces lactis (strain ATCC 8585 / CBS 2359 / DSM 70799 / NBRC 1267 / NRRL Y-1140 / WM37) (Yeast).